The following is a 434-amino-acid chain: Putative MgpC-like protein MPN_149 (434 aa).

Disordered regions lie at residues 168–193 (GSGQ…PKAV) and 215–267 (EPLD…DNNG). A compositionally biased stretch (polar residues) spans 170 to 184 (GQESSWNSQRSQKVL). The segment covering 218–229 (DSTKDGKGKDES) has biased composition (basic and acidic residues). A compositionally biased stretch (polar residues) spans 248–267 (STGSQMAAVTDSQQSGDNNG).

Belongs to the MgpC family.

The sequence is that of Putative MgpC-like protein MPN_149 from Mycoplasma pneumoniae (strain ATCC 29342 / M129 / Subtype 1) (Mycoplasmoides pneumoniae).